Consider the following 722-residue polypeptide: Glycine--tRNA ligase beta subunit (722 aa).

Belongs to the class-II aminoacyl-tRNA synthetase family. Tetramer of two alpha and two beta subunits.

Its subcellular location is the cytoplasm. It carries out the reaction tRNA(Gly) + glycine + ATP = glycyl-tRNA(Gly) + AMP + diphosphate. The protein is Glycine--tRNA ligase beta subunit of Xylella fastidiosa (strain M12).